The primary structure comprises 273 residues: NAD(P)H-hydrate epimerase (273 aa).

The YjeF N-terminal domain maps to 18-257 (ALKLDEDLIN…LLAMEYDVQE (240 aa)). 71-75 (NNGGD) lines the (6S)-NADPHX pocket. Positions 72 and 146 each coordinate K(+). Residues 150–157 (GFSFHGGP), Tyr162, and Asp188 each bind (6S)-NADPHX. Ser191 is a binding site for K(+).

It belongs to the NnrE/AIBP family. K(+) serves as cofactor.

The catalysed reaction is (6R)-NADHX = (6S)-NADHX. The enzyme catalyses (6R)-NADPHX = (6S)-NADPHX. Catalyzes the epimerization of the S- and R-forms of NAD(P)HX, a damaged form of NAD(P)H that is a result of enzymatic or heat-dependent hydration. This is a prerequisite for the S-specific NAD(P)H-hydrate dehydratase to allow the repair of both epimers of NAD(P)HX. In Giardia intestinalis (strain ATCC 50803 / WB clone C6) (Giardia lamblia), this protein is NAD(P)H-hydrate epimerase.